Consider the following 1226-residue polypeptide: Arf guanine nucleotide exchange factor SYT1 (1226 aa).

2 disordered regions span residues 17–39 (HSND…DKLR) and 113–158 (RNGQ…RNSK). Residues 131-142 (SIEKVPKPDGER) are compositionally biased toward basic and acidic residues. Residue Thr277 is modified to Phosphothreonine. Disordered regions lie at residues 311-405 (NSLM…TGMS), 954-1022 (STGS…NEDY), and 1178-1198 (LEHG…DGID). The segment covering 349-360 (LSRSRSQSTSFV) has biased composition (polar residues). At Ser369 the chain carries Phosphoserine. Polar residues predominate over residues 386–405 (GPTSVYNNKSNANSTITGMS). The 216-residue stretch at 405 to 620 (SRRSSSIVNA…TYFYENVTAK (216 aa)) folds into the SEC7 domain. The PH domain maps to 844–1074 (ILQMGAIMNL…DSINLFSAYD (231 aa)). 2 stretches are compositionally biased toward low complexity: residues 956-969 (GSHT…SSSA) and 994-1017 (SSVS…SSND).

It localises to the cytoplasm. With respect to regulation, inhibited by brefeldin A. Functionally, guanine nucleotide exchange factor for Arf GTPases, stimulating the nucleotide exchange from the GDP-bound to the GTP-bound form. Catalyzes both the GDP release by and the GTP binding to ARF2. Has no exchange activity on Rab GTPases. Involved in vesicular transport. This chain is Arf guanine nucleotide exchange factor SYT1 (SYT1), found in Saccharomyces cerevisiae (strain ATCC 204508 / S288c) (Baker's yeast).